Consider the following 91-residue polypeptide: Small ribosomal subunit protein bS6 (91 aa).

The protein belongs to the bacterial ribosomal protein bS6 family.

In terms of biological role, binds together with bS18 to 16S ribosomal RNA. This is Small ribosomal subunit protein bS6 from Leptospira borgpetersenii serovar Hardjo-bovis (strain JB197).